The sequence spans 182 residues: Gremlin-1 (182 aa).

Positions 1–24 are cleaved as a signal peptide; the sequence is MNCLVYALGSLFLLSGLLLPSSEG. Residues 23 to 65 are disordered; that stretch reads EGKKKVSGSQGAIPPPDKGQPNDSEQGQAQPGDRVRGKGKGQA. Asparagine 44 is a glycosylation site (N-linked (GlcNAc...) asparagine). Disulfide bonds link cysteine 92–cysteine 142, cysteine 106–cysteine 156, cysteine 116–cysteine 174, and cysteine 120–cysteine 176. Residues 92–182 enclose the CTCK domain; that stretch reads CKTQPLKQTI…QCRCISIDLD (91 aa).

This sequence belongs to the DAN family.

It is found in the secreted. Cytokine that has an axial patterning activity. Acts like BMP antagonist in embryonic explants. Blocks the BMP2 activity. This is Gremlin-1 (grem1) from Xenopus laevis (African clawed frog).